Consider the following 156-residue polypeptide: Small ribosomal subunit protein uS7 (156 aa).

It belongs to the universal ribosomal protein uS7 family. In terms of assembly, part of the 30S ribosomal subunit. Contacts proteins S9 and S11.

In terms of biological role, one of the primary rRNA binding proteins, it binds directly to 16S rRNA where it nucleates assembly of the head domain of the 30S subunit. Is located at the subunit interface close to the decoding center, probably blocks exit of the E-site tRNA. The sequence is that of Small ribosomal subunit protein uS7 from Mycobacterium sp. (strain JLS).